Here is an 829-residue protein sequence, read N- to C-terminus: High affinity cAMP-specific and IBMX-insensitive 3',5'-cyclic phosphodiesterase 8A (829 aa).

The disordered stretch occupies residues 16 to 46 (EDAPSPAAPPLSSGGPRLPQGQKTAALPRTR). At serine 20 the chain carries Phosphoserine. The 71-residue stretch at 213–283 (ACNSVFTALE…DTINSCIRIG (71 aa)) folds into the PAS domain. One can recognise a PAC domain in the interval 287-329 (QGIYYAKKKNGDNIQQNVKIIPVIGQGGKIRHYVSIIRVCNGN). The disordered stretch occupies residues 341-360 (SDTHTDNQTGKHKDRRKGSL). Serine 359 bears the Phosphoserine; by PKA mark. 2 positions are modified to phosphoserine: serine 386 and serine 457. Positions 454–461 (RRLSGNEY) are involved in RAF1-binding. Tyrosine 461 carries the post-translational modification Phosphotyrosine. Residues 480 to 820 (SLDDVPPRIA…KYWKGLDEMK (341 aa)) form the PDEase domain. The active-site Proton donor is the histidine 556. The a divalent metal cation site is built by histidine 560, histidine 596, aspartate 597, and aspartate 726.

The protein belongs to the cyclic nucleotide phosphodiesterase family. PDE8 subfamily. Interacts with RAF1. The interaction promotes RAF1 activity. It depends on a divalent metal cation as a cofactor. In terms of processing, phosphorylated at Ser-359 by PKA under elevated cAMP conditions, this enhances catalytic activity. As to expression, expressed in most tissues except thymus and peripheral blood leukocytes. Highest levels in testis, ovary, small intestine and colon.

It carries out the reaction 3',5'-cyclic AMP + H2O = AMP + H(+). Its pathway is purine metabolism; 3',5'-cyclic AMP degradation; AMP from 3',5'-cyclic AMP: step 1/1. With respect to regulation, inhibited by dipyridimole. Insensitive to selective PDE inhibitors including rolipram and zaprinast as well as to the non-selective inhibitor, IBMX. Unaffected by cGMP. In terms of biological role, hydrolyzes the second messenger cAMP, which is a key regulator of many important physiological processes. May be involved in maintaining basal levels of the cyclic nucleotide and/or in the cAMP regulation of germ cell development. Binding to RAF1 reduces RAF1 'Ser-259' inhibitory-phosphorylation and stimulates RAF1-dependent EGF-activated ERK-signaling. Protects against cell death induced by hydrogen peroxide and staurosporine. The chain is High affinity cAMP-specific and IBMX-insensitive 3',5'-cyclic phosphodiesterase 8A (PDE8A) from Homo sapiens (Human).